The primary structure comprises 143 residues: Small ribosomal subunit protein bS6 (143 aa).

The interval 97-143 (DTEQSLIMKSKDEKGDKHERSERRRRDDEEGDVPAATDTDGDNAEAA) is disordered. A compositionally biased stretch (basic and acidic residues) spans 105-124 (KSKDEKGDKHERSERRRRDD).

Belongs to the bacterial ribosomal protein bS6 family.

Functionally, binds together with bS18 to 16S ribosomal RNA. In Xanthomonas oryzae pv. oryzae (strain MAFF 311018), this protein is Small ribosomal subunit protein bS6.